Here is a 1026-residue protein sequence, read N- to C-terminus: Multidrug resistance protein MdtC (1026 aa).

Residues 1–6 lie on the Cytoplasmic side of the membrane; it reads MRFFAL. The helical transmembrane segment at 7–29 threads the bilayer; that stretch reads FIYRPVATILIAAAITLCGILGF. Over 30–335 the chain is Periplasmic; it reads RLLPVAPLPQ…TIRASLQEVE (306 aa). The chain crosses the membrane as a helical span at residues 336–353; the sequence is ETLAISVALVILVVFLFL. Over 354–359 the chain is Cytoplasmic; the sequence is RSGRAT. A helical membrane pass occupies residues 360–379; it reads LIPAVAVPVSLIGTFAAMYL. The Periplasmic segment spans residues 380 to 388; sequence CGFSLNNLS. A helical transmembrane segment spans residues 389–411; the sequence is LMALTIATGFVVDDAIVVLENIA. The Cytoplasmic segment spans residues 412–430; that stretch reads RHLEAGMKPLQAALQGTRE. A helical membrane pass occupies residues 431-453; sequence VGFTVISMSLSLVAVFLPLLLMG. The Periplasmic portion of the chain corresponds to 454–467; the sequence is GLPGRLLREFAVTL. A helical transmembrane segment spans residues 468–490; sequence SVAIGISLVVSLTLTPMMCGWML. The Cytoplasmic segment spans residues 491-852; the sequence is KSSKPRTQPR…QVFQQTMNSQ (362 aa). A helical membrane pass occupies residues 853–875; sequence LILIVAAIATVYIVLGILYESYV. Over 876 to 894 the chain is Periplasmic; it reads HPLTILSTLPSAGVGALLA. Residues 895-917 form a helical membrane-spanning segment; sequence LELFNAPFSLIALIGIMLLIGIV. Residues 918–947 lie on the Cytoplasmic side of the membrane; it reads KKNAIMMVDFALEAQRSGGLTPEQAIFQAC. Residues 948–970 traverse the membrane as a helical segment; the sequence is LLRFRPIMMTTLAALFGALPLVL. At 971 to 984 the chain is on the periplasmic side; it reads SGGDGSELRQPLGI. A helical transmembrane segment spans residues 985-1007; it reads TIVGGLVMSQLLTLYTTPVVYLF. The Cytoplasmic portion of the chain corresponds to 1008-1026; that stretch reads FDRLRLRFSRKNSKPVVEI.

It belongs to the resistance-nodulation-cell division (RND) (TC 2.A.6) family. MdtC subfamily. Part of a tripartite efflux system composed of MdtA, MdtB and MdtC. MdtC forms a heteromultimer with MdtB.

The protein resides in the cell inner membrane. The protein is Multidrug resistance protein MdtC of Salmonella typhimurium (strain LT2 / SGSC1412 / ATCC 700720).